Reading from the N-terminus, the 444-residue chain is Adenylosuccinate synthetase (444 aa).

GTP contacts are provided by residues 13–19 and 41–43; these read GDEGKGK and GHT. The active-site Proton acceptor is Asp14. 2 residues coordinate Mg(2+): Asp14 and Gly41. IMP-binding positions include 14 to 17, 39 to 42, Thr129, Arg143, Gln224, Thr239, and Arg303; these read DEGK and NAGH. The Proton donor role is filled by His42. Residue 299-305 participates in substrate binding; it reads TTTGRRR. Residues Arg305, 331–333, and 413–415 contribute to the GTP site; these read KLD and SLG.

This sequence belongs to the adenylosuccinate synthetase family. Homodimer. The cofactor is Mg(2+).

It localises to the cytoplasm. The enzyme catalyses IMP + L-aspartate + GTP = N(6)-(1,2-dicarboxyethyl)-AMP + GDP + phosphate + 2 H(+). The protein operates within purine metabolism; AMP biosynthesis via de novo pathway; AMP from IMP: step 1/2. Its function is as follows. Plays an important role in the de novo pathway of purine nucleotide biosynthesis. Catalyzes the first committed step in the biosynthesis of AMP from IMP. In Synechocystis sp. (strain ATCC 27184 / PCC 6803 / Kazusa), this protein is Adenylosuccinate synthetase.